Consider the following 293-residue polypeptide: 33 kDa chaperonin (293 aa).

Cystine bridges form between Cys237–Cys239 and Cys271–Cys274.

This sequence belongs to the HSP33 family. Under oxidizing conditions two disulfide bonds are formed involving the reactive cysteines. Under reducing conditions zinc is bound to the reactive cysteines and the protein is inactive.

It is found in the cytoplasm. In terms of biological role, redox regulated molecular chaperone. Protects both thermally unfolding and oxidatively damaged proteins from irreversible aggregation. Plays an important role in the bacterial defense system toward oxidative stress. In Haemophilus influenzae (strain PittEE), this protein is 33 kDa chaperonin.